The sequence spans 198 residues: Carnitine operon protein CaiE (198 aa).

A disordered region spans residues 179–198 (VEENRPRLKGTTDVKPKSAQ). Residues 180-198 (EENRPRLKGTTDVKPKSAQ) are compositionally biased toward basic and acidic residues.

It belongs to the transferase hexapeptide repeat family.

Its pathway is amine and polyamine metabolism; carnitine metabolism. In terms of biological role, overproduction of CaiE stimulates the activity of CaiB and CaiD. The chain is Carnitine operon protein CaiE from Salmonella agona (strain SL483).